The following is a 254-amino-acid chain: Small ribosomal subunit protein uS2 (254 aa).

Belongs to the universal ribosomal protein uS2 family.

The polypeptide is Small ribosomal subunit protein uS2 (Borrelia recurrentis (strain A1)).